The following is a 194-amino-acid chain: dCTP deaminase (194 aa).

DCTP-binding positions include 110 to 115 (RSSLAR), Asp128, 136 to 138 (VLE), Tyr171, Lys178, and Gln182. Catalysis depends on Glu138, which acts as the Proton donor/acceptor.

It belongs to the dCTP deaminase family. In terms of assembly, homotrimer.

It catalyses the reaction dCTP + H2O + H(+) = dUTP + NH4(+). It functions in the pathway pyrimidine metabolism; dUMP biosynthesis; dUMP from dCTP (dUTP route): step 1/2. Catalyzes the deamination of dCTP to dUTP. The polypeptide is dCTP deaminase (Mannheimia succiniciproducens (strain KCTC 0769BP / MBEL55E)).